The sequence spans 254 residues: Alcohol dehydrogenase 2 (254 aa).

An NAD(+)-binding site is contributed by 10 to 33 (FVAGLGGIGLDTSREIVKSGPKNL). Serine 138 provides a ligand contact to substrate. Tyrosine 151 serves as the catalytic Proton acceptor.

This sequence belongs to the short-chain dehydrogenases/reductases (SDR) family. As to quaternary structure, homodimer.

The enzyme catalyses a primary alcohol + NAD(+) = an aldehyde + NADH + H(+). The catalysed reaction is a secondary alcohol + NAD(+) = a ketone + NADH + H(+). The sequence is that of Alcohol dehydrogenase 2 (Adh2) from Drosophila hydei (Fruit fly).